The primary structure comprises 610 residues: Zinc metalloproteinase-disintegrin-like acurhagin (610 aa).

The N-terminal stretch at 1 to 20 (MIQVLLVTICLAAFPYQGSS) is a signal peptide. Residues 21–191 (IILESGDVND…ISQLNLIPEQ (171 aa)) constitute a propeptide that is removed on maturation. Glutamine 192 is modified (pyrrolidone carboxylic acid). A Peptidase M12B domain is found at 198 to 394 (KYVETVVVVD…HNPECIDNEP (197 aa)). Ca(2+) contacts are provided by glutamate 201 and aspartate 285. Intrachain disulfides connect cysteine 309–cysteine 389, cysteine 349–cysteine 373, and cysteine 351–cysteine 356. Histidine 334 contacts Zn(2+). Glutamate 335 is a catalytic residue. Zn(2+) contacts are provided by histidine 338 and histidine 344. Asparagine 372 carries N-linked (GlcNAc...) asparagine glycosylation. Ca(2+)-binding residues include cysteine 389, asparagine 392, asparagine 407, leucine 409, glutamate 411, glutamate 414, and aspartate 417. The Disintegrin domain maps to 402–488 (PPLCGNELLE…ECPADVFHKN (87 aa)). 14 cysteine pairs are disulfide-bonded: cysteine 405–cysteine 434, cysteine 416–cysteine 429, cysteine 418–cysteine 424, cysteine 428–cysteine 451, cysteine 442–cysteine 448, cysteine 447–cysteine 473, cysteine 460–cysteine 480, cysteine 467–cysteine 499, cysteine 492–cysteine 504, cysteine 511–cysteine 561, cysteine 526–cysteine 572, cysteine 539–cysteine 549, cysteine 556–cysteine 598, and cysteine 592–cysteine 603. Positions 466 to 468 (ECD) match the D/ECD-tripeptide motif. Residues aspartate 468, proline 469, glutamate 471, aspartate 483, and valine 484 each contribute to the Ca(2+) site.

The protein belongs to the venom metalloproteinase (M12B) family. P-III subfamily. P-IIIa sub-subfamily. As to quaternary structure, monomer. It depends on Zn(2+) as a cofactor. N-glycosylated. In terms of tissue distribution, expressed by the venom gland.

Its subcellular location is the secreted. Its activity is regulated as follows. The proteinase activity is slightly enhanced by Ca(2+) and Mg(2+), but is completely inhibited by Zn(2+). Is completely inhibited by phenanthroline and EDTA. Not inhibited by PMSF. In terms of biological role, snake venom zinc metalloprotease that causes hemorrhage and dose-dependently inhibits platelet aggregation triggered by collagen. This inhibition is due to its binding to glycoprotein VI (GP6) and collagen. The binding to GP6 results in inhibition of the signaling pathway (decrease of tyrosine phosphorylation of signaling proteins such as Syk, LAT, PI3-K and PLCgamma2). Preferentially cleaves alpha chain (FGA) of fibrinogen, followed by beta chain (FGB). Also degrades the extracellular matrix protein fibronectin (FN1), and cleaves collagen and von Willebrand factor (VWF). This chain is Zinc metalloproteinase-disintegrin-like acurhagin, found in Deinagkistrodon acutus (Hundred-pace snake).